Consider the following 422-residue polypeptide: Autophagy-related protein 21 (422 aa).

WD repeat units follow at residues 1-35 (MGLS…KCFE), 102-153 (SFPH…ITGQ), 166-206 (MTSL…SKSV), 228-268 (VHKG…ESEL), 280-319 (NRPC…RLLS), and 374-414 (KNTK…GSCV). A L/FRRG motif motif is present at residues 276–280 (FRRGN).

It belongs to the WD repeat PROPPIN family.

It is found in the cytoplasm. Its subcellular location is the membrane. The protein resides in the vacuole membrane. Required for cytoplasm to vacuole transport (Cvt) vesicles formation and mitophagy. Involved in binding of phosphatidylethanolamine to ATG8 and in recruitment of ATG8 and ATG5 to the pre-autophagosomal structure. Protects ATG8 from ARG4-mediated cleavage. This chain is Autophagy-related protein 21 (ATG21), found in Vanderwaltozyma polyspora (strain ATCC 22028 / DSM 70294 / BCRC 21397 / CBS 2163 / NBRC 10782 / NRRL Y-8283 / UCD 57-17) (Kluyveromyces polysporus).